Consider the following 196-residue polypeptide: Glycerol-3-phosphate acyltransferase (196 aa).

Transmembrane regions (helical) follow at residues 2 to 22, 51 to 71, 80 to 100, 112 to 132, and 137 to 156; these read GWWL…SYLI, VVGG…VFIA, LVSL…FMKF, IIFC…LVIV, and YASL…GYLF.

It belongs to the PlsY family. Probably interacts with PlsX.

The protein resides in the cell inner membrane. The catalysed reaction is an acyl phosphate + sn-glycerol 3-phosphate = a 1-acyl-sn-glycero-3-phosphate + phosphate. The protein operates within lipid metabolism; phospholipid metabolism. Functionally, catalyzes the transfer of an acyl group from acyl-phosphate (acyl-PO(4)) to glycerol-3-phosphate (G3P) to form lysophosphatidic acid (LPA). This enzyme utilizes acyl-phosphate as fatty acyl donor, but not acyl-CoA or acyl-ACP. The sequence is that of Glycerol-3-phosphate acyltransferase from Thermotoga petrophila (strain ATCC BAA-488 / DSM 13995 / JCM 10881 / RKU-1).